A 335-amino-acid polypeptide reads, in one-letter code: Syntaxin-18 (335 aa).

The Cytoplasmic portion of the chain corresponds to 1 to 309 (MAVDITLLFR…EDIREAIKNN (309 aa)). Positions 168-208 (KLEPEPNTKTRESTSSEKVSRSPSKDSEENPATEERPEKIL) are enriched in basic and acidic residues. The disordered stretch occupies residues 168–226 (KLEPEPNTKTRESTSSEKVSRSPSKDSEENPATEERPEKILAETQPELGTWGDGKGEDE). The 63-residue stretch at 243-305 (IGEMNSLFDE…KEGNEDIREA (63 aa)) folds into the t-SNARE coiled-coil homology domain. The chain crosses the membrane as a helical; Anchor for type IV membrane protein span at residues 310-330 (AGFRVWILFFLVMCSFSLLFL). Residues 331 to 335 (DWYDS) lie on the Vesicular side of the membrane.

Belongs to the syntaxin family. In terms of assembly, component of a SNARE complex consisting of STX18, USE1L, BNIP1/SEC20L, and SEC22B. RINT1/TIP20L and ZW10 are associated with the complex through interaction with BNIP1/SEC20L. Interacts directly with USE1L and BNIP1/SEC20L.

It localises to the endoplasmic reticulum membrane. The protein localises to the golgi apparatus membrane. Syntaxin that may be involved in targeting and fusion of Golgi-derived retrograde transport vesicles with the ER. This chain is Syntaxin-18 (STX18), found in Pongo abelii (Sumatran orangutan).